The sequence spans 491 residues: UDP-N-acetylmuramate--L-alanine ligase (491 aa).

126–132 (GTHGKTT) serves as a coordination point for ATP.

The protein belongs to the MurCDEF family.

It is found in the cytoplasm. The enzyme catalyses UDP-N-acetyl-alpha-D-muramate + L-alanine + ATP = UDP-N-acetyl-alpha-D-muramoyl-L-alanine + ADP + phosphate + H(+). The protein operates within cell wall biogenesis; peptidoglycan biosynthesis. Its function is as follows. Cell wall formation. The chain is UDP-N-acetylmuramate--L-alanine ligase from Salmonella gallinarum (strain 287/91 / NCTC 13346).